The primary structure comprises 264 residues: N-carbamoylsarcosine amidase (264 aa).

C177 (nucleophile) is an active-site residue. Residues 240-264 are disordered; the sequence is TVPKTLSDPQPEVEAPADPVFAEQH.

As to quaternary structure, homotetramer. It depends on sulfate as a cofactor.

It carries out the reaction N-carbamoylsarcosine + H2O + 2 H(+) = sarcosine + NH4(+) + CO2. The protein operates within amine and polyamine degradation; creatinine degradation; sarcosine from creatinine: step 3/3. The polypeptide is N-carbamoylsarcosine amidase (Arthrobacter sp).